A 185-amino-acid polypeptide reads, in one-letter code: Putative lipoprotein LprB (185 aa).

The first 24 residues, 1-24, serve as a signal peptide directing secretion; sequence MRRKVRRLTLAVSALVALFPAVAG. The N-palmitoyl cysteine moiety is linked to residue cysteine 25. Residue cysteine 25 is the site of S-diacylglycerol cysteine attachment. Residues 26–50 are disordered; the sequence is SDSGDNKPGATIPSTPANAEGRHGP.

It is found in the cell membrane. The chain is Putative lipoprotein LprB (lprB) from Mycobacterium tuberculosis (strain CDC 1551 / Oshkosh).